The primary structure comprises 319 residues: tRNA dimethylallyltransferase (319 aa).

An ATP-binding site is contributed by 11–18 (GPTCSGKS). Substrate is bound at residue 13–18 (TCSGKS). Interaction with substrate tRNA regions lie at residues 36-39 (DSMQ) and 160-164 (QRIAR).

It belongs to the IPP transferase family. Monomer. The cofactor is Mg(2+).

The enzyme catalyses adenosine(37) in tRNA + dimethylallyl diphosphate = N(6)-dimethylallyladenosine(37) in tRNA + diphosphate. Catalyzes the transfer of a dimethylallyl group onto the adenine at position 37 in tRNAs that read codons beginning with uridine, leading to the formation of N6-(dimethylallyl)adenosine (i(6)A). In Granulibacter bethesdensis (strain ATCC BAA-1260 / CGDNIH1), this protein is tRNA dimethylallyltransferase.